The primary structure comprises 96 residues: Muconolactone Delta-isomerase (96 aa).

The protein belongs to the muconolactone Delta-isomerase family. As to quaternary structure, homodecamer.

It catalyses the reaction (S)-muconolactone = (4,5-dihydro-5-oxofuran-2-yl)-acetate. It functions in the pathway aromatic compound metabolism; beta-ketoadipate pathway; 5-oxo-4,5-dihydro-2-furylacetate from catechol: step 3/3. This chain is Muconolactone Delta-isomerase (catC), found in Acinetobacter baylyi (strain ATCC 33305 / BD413 / ADP1).